The chain runs to 269 residues: Phosphoribosylformylglycinamidine synthase subunit PurQ (269 aa).

Residues 5–262 enclose the Glutamine amidotransferase type-1 domain; the sequence is VLVMSGYGIN…IESNLQIFKN (258 aa). Catalysis depends on C95, which acts as the Nucleophile. Catalysis depends on residues H222, E224, and E232.

Part of the FGAM synthase complex composed of 1 PurL, 1 PurQ and 2 PurS subunits.

The protein localises to the cytoplasm. It carries out the reaction N(2)-formyl-N(1)-(5-phospho-beta-D-ribosyl)glycinamide + L-glutamine + ATP + H2O = 2-formamido-N(1)-(5-O-phospho-beta-D-ribosyl)acetamidine + L-glutamate + ADP + phosphate + H(+). It catalyses the reaction L-glutamine + H2O = L-glutamate + NH4(+). Its pathway is purine metabolism; IMP biosynthesis via de novo pathway; 5-amino-1-(5-phospho-D-ribosyl)imidazole from N(2)-formyl-N(1)-(5-phospho-D-ribosyl)glycinamide: step 1/2. Its function is as follows. Part of the phosphoribosylformylglycinamidine synthase complex involved in the purines biosynthetic pathway. Catalyzes the ATP-dependent conversion of formylglycinamide ribonucleotide (FGAR) and glutamine to yield formylglycinamidine ribonucleotide (FGAM) and glutamate. The FGAM synthase complex is composed of three subunits. PurQ produces an ammonia molecule by converting glutamine to glutamate. PurL transfers the ammonia molecule to FGAR to form FGAM in an ATP-dependent manner. PurS interacts with PurQ and PurL and is thought to assist in the transfer of the ammonia molecule from PurQ to PurL. This is Phosphoribosylformylglycinamidine synthase subunit PurQ from Methanococcus maripaludis (strain C5 / ATCC BAA-1333).